The chain runs to 593 residues: Mitosis inducer protein kinase cdr1 (593 aa).

Positions 12 to 258 (WRLGKTLGTG…IPEVFSHPFL (247 aa)) constitute a Protein kinase domain. ATP contacts are provided by residues 18-26 (LGTGSTSCV) and lysine 41. Aspartate 128 (proton acceptor) is an active-site residue. At serine 550 the chain carries Phosphoserine.

It belongs to the protein kinase superfamily. CAMK Ser/Thr protein kinase family. NIM1 subfamily. As to quaternary structure, interacts with msp1.

It carries out the reaction L-seryl-[protein] + ATP = O-phospho-L-seryl-[protein] + ADP + H(+). It catalyses the reaction L-threonyl-[protein] + ATP = O-phospho-L-threonyl-[protein] + ADP + H(+). Functionally, this protein, a dose-dependent mitotic inducer, appears to function as a negative regulator of mitosis inhibitor wee1 by phosphorylating and inactivating it. In Schizosaccharomyces pombe (strain 972 / ATCC 24843) (Fission yeast), this protein is Mitosis inducer protein kinase cdr1 (cdr1).